A 481-amino-acid polypeptide reads, in one-letter code: Protein hedgehog (481 aa).

A lipid anchor (N-palmitoyl cysteine) is attached at cysteine 93. Positions 157, 158, 163, 193, 194, 197, and 199 each coordinate Ca(2+). Residue glycine 265 is the site of Cholesterol glycine ester attachment.

This sequence belongs to the hedgehog family. In terms of assembly, interacts with shf. The C-terminal part of the hedgehog protein precursor displays an autoproteolysis activity that results in the cleavage of the full-length protein into two parts (N-product and C-product). In addition, the C-terminal part displays a cholesterol transferase activity that results by the covalent attachment of a cholesterol moiety to the C-terminal of the newly generated N-product. The N-product is the active species in both local and long-range signaling, whereas the C-product has no signaling activity. Post-translationally, cholesterylation is required for N-product targeting to lipid rafts and multimerization. In terms of processing, N-palmitoylation by Rasp of the hedgehog N-product, within the secretory pathway, is required for the embryonic and larval patterning activities of the hedgehog signal.

Its subcellular location is the nucleus. The protein resides in the cytoplasm. The protein localises to the cell membrane. The catalysed reaction is glycyl-L-cysteinyl-[protein] + cholesterol + H(+) = [protein]-C-terminal glycyl cholesterol ester + N-terminal L-cysteinyl-[protein]. In terms of biological role, the C-terminal part of the hedgehog protein precursor displays an autoproteolysis activity that results in the cleavage of the full-length protein into two parts (N-product and C-product). In addition, the C-terminal part displays a cholesterol transferase activity that results by the covalent attachment of a cholesterol moiety to the C-terminal of the newly generated N-product. Once cleaved, the C-product has no signaling activity and diffuses from the cell. Its function is as follows. The dually lipidated hedgehog protein N-product is a morphogen which is essential for a variety of patterning events during development. Establishes the anterior-posterior axis of the embryonic segments and patterns the larval imaginal disks. Binds to the patched (ptc) receptor, which functions in association with smoothened (smo), to activate the transcription of target genes wingless (wg), decapentaplegic (dpp) and ptc. In the absence of hh, ptc represses the constitutive signaling activity of smo through fused (fu). Essential component of a signaling pathway which regulates the Duox-dependent gut immune response to bacterial uracil; required to activate Cad99C-dependent endosome formation, norpA-dependent Ca2+ mobilization and p38 MAPK, which are essential steps in the Duox-dependent production of reactive oxygen species (ROS) in response to intestinal bacterial infection. During photoreceptor differentiation, it up-regulates transcription of Ubr3, which in turn promotes the hh-signaling pathway by mediating the ubiquitination and degradation of cos. In Drosophila pseudoobscura pseudoobscura (Fruit fly), this protein is Protein hedgehog (hh-1).